A 277-amino-acid chain; its full sequence is Putative thiosulfate sulfurtransferase (277 aa).

Rhodanese domains are found at residues 18–125 (KAPK…PLSA) and 154–274 (AIGT…APIE). Lys67 is covalently cross-linked (Isoglutamyl lysine isopeptide (Lys-Gln) (interchain with Q-Cter in protein Pup)). The active-site Cysteine persulfide intermediate is the Cys233. Arg238 lines the substrate pocket.

The catalysed reaction is thiosulfate + hydrogen cyanide = thiocyanate + sulfite + 2 H(+). In terms of biological role, may be a sulfotransferase involved in the formation of thiosulfate. The polypeptide is Putative thiosulfate sulfurtransferase (Mycolicibacterium smegmatis (strain ATCC 700084 / mc(2)155) (Mycobacterium smegmatis)).